A 192-amino-acid chain; its full sequence is Fe/S biogenesis protein NfuA (192 aa).

2 residues coordinate [4Fe-4S] cluster: Cys149 and Cys152.

Belongs to the NfuA family. In terms of assembly, homodimer. [4Fe-4S] cluster is required as a cofactor.

Its function is as follows. Involved in iron-sulfur cluster biogenesis. Binds a 4Fe-4S cluster, can transfer this cluster to apoproteins, and thereby intervenes in the maturation of Fe/S proteins. Could also act as a scaffold/chaperone for damaged Fe/S proteins. This chain is Fe/S biogenesis protein NfuA, found in Aeromonas hydrophila subsp. hydrophila (strain ATCC 7966 / DSM 30187 / BCRC 13018 / CCUG 14551 / JCM 1027 / KCTC 2358 / NCIMB 9240 / NCTC 8049).